The chain runs to 299 residues: Homoserine O-acetyltransferase (299 aa).

Residue Cys142 is the Acyl-thioester intermediate of the active site. Residues Lys163 and Ser192 each coordinate substrate. His235 acts as the Proton acceptor in catalysis. Residue Glu237 is part of the active site. Arg249 provides a ligand contact to substrate.

This sequence belongs to the MetA family.

It localises to the cytoplasm. The enzyme catalyses L-homoserine + acetyl-CoA = O-acetyl-L-homoserine + CoA. Its pathway is amino-acid biosynthesis; L-methionine biosynthesis via de novo pathway; O-acetyl-L-homoserine from L-homoserine: step 1/1. Transfers an acetyl group from acetyl-CoA to L-homoserine, forming acetyl-L-homoserine. This is Homoserine O-acetyltransferase from Synechococcus elongatus (strain ATCC 33912 / PCC 7942 / FACHB-805) (Anacystis nidulans R2).